Consider the following 210-residue polypeptide: tRNA (guanine-N(7)-)-methyltransferase (210 aa).

S-adenosyl-L-methionine contacts are provided by Glu36, Glu61, Asp90, and Asp112. Residue Asp112 is part of the active site. Substrate is bound by residues Lys116, Asp148, and 188-191 (TEYE).

It belongs to the class I-like SAM-binding methyltransferase superfamily. TrmB family.

It catalyses the reaction guanosine(46) in tRNA + S-adenosyl-L-methionine = N(7)-methylguanosine(46) in tRNA + S-adenosyl-L-homocysteine. It participates in tRNA modification; N(7)-methylguanine-tRNA biosynthesis. Catalyzes the formation of N(7)-methylguanine at position 46 (m7G46) in tRNA. In Mycoplasma pneumoniae (strain ATCC 29342 / M129 / Subtype 1) (Mycoplasmoides pneumoniae), this protein is tRNA (guanine-N(7)-)-methyltransferase.